Reading from the N-terminus, the 105-residue chain is MPADHFLKRQAMSDFIICYDITDPRRLGRLYRYLIKRAVPLQYSVFLFRGDDRQLERCIQDAIELIDEKQDDLRVYPLPGRGLKARIGRPTLPEGIQWSGLPAKW.

D20 serves as a coordination point for Mg(2+).

It belongs to the CRISPR-associated endoribonuclease Cas2 protein family. As to quaternary structure, homodimer, forms a heterotetramer with a Cas1 homodimer. Mg(2+) serves as cofactor.

In terms of biological role, CRISPR (clustered regularly interspaced short palindromic repeat), is an adaptive immune system that provides protection against mobile genetic elements (viruses, transposable elements and conjugative plasmids). CRISPR clusters contain sequences complementary to antecedent mobile elements and target invading nucleic acids. CRISPR clusters are transcribed and processed into CRISPR RNA (crRNA). Functions as a ssRNA-specific endoribonuclease. Involved in the integration of spacer DNA into the CRISPR cassette. This Nitrosomonas europaea (strain ATCC 19718 / CIP 103999 / KCTC 2705 / NBRC 14298) protein is CRISPR-associated endoribonuclease Cas2 1 (cas21).